Consider the following 624-residue polypeptide: MEEALLSTPINPNNFPAKLWRLVNSPRYRSIRWDGRGEGLLIDQPLFEAELLSPPGPGAGGAGGAGSSGGGGGSGVGAAGAEPELFKTTNFTSFIRQLNLYGFRKVVLGGPGAAGPGPGPGAGGPAGDGPLHHFHSPHFRRDQPQLLVHLKRLTSANKAKLAAGLEVPCRPPNRFQRLLITSASASASASTSPLQHQDPPPQPAGPRPEQHGPVAVGQFHRSFRRDNLSPYSYVSTSSHNHSAFPLKGLDRTPIPPRTWQNSLGMHPGQVETSPTFSDKGVPFPVLQRFPTEVTYTLQPSATSVHVQQGPQTMVSSSQKYSNYTPSAQYSQAYYPTAVLQCCSPPTHMDALSSCVTPTASSYAHCNYFQNPPMQSSYPVEFLPSNWPCSATDENKKTEVNLEAVFQIVDELHSSPKLEMVKVEPVETQCPSSQANRGQHILPNANSSNPSSTSQASQLEPLTPVGSDITSFVVGTEQAITCSLPQSPEYIYTIHTAQPLENSTMQESATIQQTHVKLKEQLNHNPSPSSVVFVQEGLPFSTPQVDSSIKCQTNPSENILPSEQMGFLISEMGPANKSTKDTGLSTPARYRERRSNSQGKSPDLHLLVDVACKQEHFPKEEELKE.

The DNA-binding element occupies 11 to 228 (NPNNFPAKLW…FHRSFRRDNL (218 aa)). Disordered regions lie at residues 52 to 77 (LSPPGPGAGGAGGAGSSGGGGGSGVG), 112 to 138 (GAAGPGPGPGAGGPAGDGPLHHFHSPH), 186 to 214 (SASASTSPLQHQDPPPQPAGPRPEQHGPV), 429 to 461 (CPSSQANRGQHILPNANSSNPSSTSQASQLEPL), and 572 to 605 (GPANKSTKDTGLSTPARYRERRSNSQGKSPDLHL). Composition is skewed to gly residues over residues 58-77 (GAGGAGGAGSSGGGGGSGVG) and 112-127 (GAAGPGPGPGAGGPAG). Composition is skewed to low complexity over residues 186–197 (SASASTSPLQHQ) and 442–457 (PNANSSNPSSTSQASQ). At S600 the chain carries Phosphoserine.

This sequence belongs to the HSF family. As to quaternary structure, homooligomer. Highly expressed in testis particularly in spermatocytes (at protein level). Not expressed in fetal testis and ovary.

The protein localises to the nucleus. The protein resides in the chromosome. In terms of biological role, DNA-binding transcription factor that is essential for male fertility, spermatogenesis and meiotic prophase progression in spermatocytes under non-stress conditions. Positvely and negatively regulates gene expression to ensure progression of meiotic prophase beyond pachytene stage in spermatocytes. Plays a role in male germline meiotic sex chromosome remodeling and silencing through regulation of SMARCA4. The protein is Heat shock factor protein 5 (Hsf5) of Mus musculus (Mouse).